Consider the following 463-residue polypeptide: Argininosuccinate lyase (463 aa).

It belongs to the lyase 1 family. Argininosuccinate lyase subfamily.

It is found in the cytoplasm. It carries out the reaction 2-(N(omega)-L-arginino)succinate = fumarate + L-arginine. It participates in amino-acid biosynthesis; L-arginine biosynthesis; L-arginine from L-ornithine and carbamoyl phosphate: step 3/3. In Methylorubrum populi (strain ATCC BAA-705 / NCIMB 13946 / BJ001) (Methylobacterium populi), this protein is Argininosuccinate lyase.